The sequence spans 352 residues: MTALRPERDSGTAGDQGSSYGQPYGDSGAFGGGRYEESAAGEENRPPLLDDETVALRIPEPPAPRTAAGTGPIGGGPDGGGRAARRKAAKRRHGRRGAPRDQAPEEEAEQAPKAPLSRVEARRQARARKPGAAVVASRAIGEIFITTGVLMLLFVTYQLWWTNVRAHAQANQAASNLQDDWANGKRSPGSFEPGQGFALLHIPKLDVVVPIAEGISSKKVLDRGMVGHYAEDGLKTAMPDAKAGNFGLAGHRNTHGEPFRYINKLEPGDPIVVETQDKYFVYKMASILPVTSPSNVSVLDPVPKQSGFKGPGRYITLTTCTPEFTSKYRMIVWGKMVEERPRSKGKPDALVS.

Basic and acidic residues-rich tracts occupy residues 1-10 (MTALRPERDS) and 34-45 (RYEESAAGEENR). The disordered stretch occupies residues 1–132 (MTALRPERDS…RQARARKPGA (132 aa)). Residues 1-139 (MTALRPERDS…PGAAVVASRA (139 aa)) lie on the Cytoplasmic side of the membrane. The tract at residues 15–79 (DQGSSYGQPY…TGPIGGGPDG (65 aa)) is required for protein stability. Residues 71 to 82 (GPIGGGPDGGGR) show a composition bias toward gly residues. Residues 83–97 (AARRKAAKRRHGRRG) are compositionally biased toward basic residues. A helical membrane pass occupies residues 140–160 (IGEIFITTGVLMLLFVTYQLW). Residues 161 to 352 (WTNVRAHAQA…SKGKPDALVS (192 aa)) are Extracellular-facing. Residues His251 and Cys320 contribute to the active site. The Proton donor role is filled by Arg329.

It belongs to the bacterial sortase family. Class E subfamily.

The protein localises to the cell membrane. It catalyses the reaction The enzyme catalyzes a cell wall sorting reaction in which a surface protein with a sorting signal containing a LPXTG motif is cleaved between the Thr and Gly residue. The resulting threonine carboxyl end of the protein is covalently attached to a pentaglycine cross-bridge of peptidoglycan.. Its function is as follows. Transpeptidase that anchors surface proteins to the cell wall. Recognizes both Leu-Ala-x-Thr-Gly and Leu-Pro-x-Thr-Gly, with a preference for the former. Unlike the S.aureus sortase it cleaves not only the Thr-Gly motif but also the Ala-X bond; Ala-Glu and Ala-His bonds are better substrates than the Thr-Gly motif in vitro. Among its possible substrates are the chaplins ChpA, ChpB and ChpC; this enzyme is less important for ChpC attachment than is SrtE2. A double knockout mutant of srtE1 and srtE2 shows a developmental defect in aerial hyphae formation more dramatic than that due to chaplin deletion. In Streptomyces coelicolor (strain ATCC BAA-471 / A3(2) / M145), this protein is Sortase SrtE1.